The primary structure comprises 412 residues: Divalent metal cation transporter MntH (412 aa).

10 consecutive transmembrane segments (helical) span residues 19–39, 46–66, 98–118, 122–142, 155–175, 196–216, 241–261, 286–306, 348–368, and 392–412; these read LSLMGPAFIAAIGYIDPGNFA, AAYGYTLLWVVVWANLMAMLI, WVQAEIIAMATDLAEFIGAAI, LLLGVSLLEGAILTAIATFLI, MVIGGLLLFVAAAYIVELVFS, AVLLAAGVLGATIMPHVIYLH, IAMTIAGFVNLAMMATAAAAF, AAAVIFGLSLVAAGLSSTVVG, VLVLSQVVLSFGIALALVPLL, and LIVVLVVSLNMYLLIDTMSGI.

Belongs to the NRAMP family.

It localises to the cell inner membrane. Its function is as follows. H(+)-stimulated, divalent metal cation uptake system. This is Divalent metal cation transporter MntH from Pectobacterium carotovorum subsp. carotovorum (strain PC1).